Consider the following 412-residue polypeptide: Serine hydroxymethyltransferase (412 aa).

(6S)-5,6,7,8-tetrahydrofolate is bound by residues leucine 117 and 121-123; that span reads GHL. Lysine 226 carries the N6-(pyridoxal phosphate)lysine modification. A (6S)-5,6,7,8-tetrahydrofolate-binding site is contributed by 349-351; it reads SPF.

It belongs to the SHMT family. Homodimer. Requires pyridoxal 5'-phosphate as cofactor.

It localises to the cytoplasm. The catalysed reaction is (6R)-5,10-methylene-5,6,7,8-tetrahydrofolate + glycine + H2O = (6S)-5,6,7,8-tetrahydrofolate + L-serine. The protein operates within one-carbon metabolism; tetrahydrofolate interconversion. It functions in the pathway amino-acid biosynthesis; glycine biosynthesis; glycine from L-serine: step 1/1. Functionally, catalyzes the reversible interconversion of serine and glycine with tetrahydrofolate (THF) serving as the one-carbon carrier. This reaction serves as the major source of one-carbon groups required for the biosynthesis of purines, thymidylate, methionine, and other important biomolecules. Also exhibits THF-independent aldolase activity toward beta-hydroxyamino acids, producing glycine and aldehydes, via a retro-aldol mechanism. The polypeptide is Serine hydroxymethyltransferase (Geobacillus kaustophilus (strain HTA426)).